The chain runs to 743 residues: 1,4-alpha-glucan branching enzyme GlgB (743 aa).

D416 (nucleophile) is an active-site residue. E469 serves as the catalytic Proton donor.

This sequence belongs to the glycosyl hydrolase 13 family. GlgB subfamily. In terms of assembly, monomer.

The catalysed reaction is Transfers a segment of a (1-&gt;4)-alpha-D-glucan chain to a primary hydroxy group in a similar glucan chain.. The protein operates within glycan biosynthesis; glycogen biosynthesis. In terms of biological role, catalyzes the formation of the alpha-1,6-glucosidic linkages in glycogen by scission of a 1,4-alpha-linked oligosaccharide from growing alpha-1,4-glucan chains and the subsequent attachment of the oligosaccharide to the alpha-1,6 position. This is 1,4-alpha-glucan branching enzyme GlgB from Shewanella baltica (strain OS195).